A 243-amino-acid chain; its full sequence is Large ribosomal subunit protein uL2 (243 aa).

A disordered region spans residues 202 to 243 (HGGGRHQHVGQSSTVSRNAPPGAKVGSIAARKTGRAKIKDRR). Basic residues predominate over residues 233-243 (KTGRAKIKDRR).

Belongs to the universal ribosomal protein uL2 family. As to quaternary structure, part of the 50S ribosomal subunit. Forms a bridge to the 30S subunit in the 70S ribosome.

One of the primary rRNA binding proteins. Required for association of the 30S and 50S subunits to form the 70S ribosome, for tRNA binding and peptide bond formation. It has been suggested to have peptidyltransferase activity; this is somewhat controversial. Makes several contacts with the 16S rRNA in the 70S ribosome. The chain is Large ribosomal subunit protein uL2 from Cenarchaeum symbiosum (strain A).